A 219-amino-acid chain; its full sequence is Formate dehydrogenase 2 subunit beta (cytochrome c-553) (219 aa).

A 4Fe-4S ferredoxin-type 1 domain is found at 3–32 (KAFLIDTTRCTACRGCQLACKEWHDLPANV). Residues Cys12, Cys15, Cys18, Cys22, Cys74, Cys77, Cys82, Cys124, Cys141, Cys144, Cys156, and Cys160 each contribute to the [4Fe-4S] cluster site. The 4Fe-4S ferredoxin-type 2 domain maps to 132 to 171 (DPKTKRITKCDMCFDRVSAGMQPICVKTCPTGTMAFGERD).

Heterotrimer of cytochrome c3 FDH2C and formate dehydrogenase FDH2 alpha and beta subunits that forms the FdhABC(3) complex. Requires [4Fe-4S] cluster as cofactor.

The protein resides in the periplasm. Its function is as follows. Beta chain of the formate dehydrogenase (FDH) that catalyzes the reversible two-electron oxidation of formate to carbon dioxide. The beta chain is an electron transfer unit. The protein is Formate dehydrogenase 2 subunit beta (cytochrome c-553) of Nitratidesulfovibrio vulgaris (strain ATCC 29579 / DSM 644 / CCUG 34227 / NCIMB 8303 / VKM B-1760 / Hildenborough) (Desulfovibrio vulgaris).